We begin with the raw amino-acid sequence, 208 residues long: ATP-dependent Clp protease proteolytic subunit (208 aa).

Residue S107 is the Nucleophile of the active site. Residue H132 is part of the active site.

Belongs to the peptidase S14 family. Fourteen ClpP subunits assemble into 2 heptameric rings which stack back to back to give a disk-like structure with a central cavity, resembling the structure of eukaryotic proteasomes.

The protein localises to the cytoplasm. It catalyses the reaction Hydrolysis of proteins to small peptides in the presence of ATP and magnesium. alpha-casein is the usual test substrate. In the absence of ATP, only oligopeptides shorter than five residues are hydrolyzed (such as succinyl-Leu-Tyr-|-NHMec, and Leu-Tyr-Leu-|-Tyr-Trp, in which cleavage of the -Tyr-|-Leu- and -Tyr-|-Trp bonds also occurs).. Cleaves peptides in various proteins in a process that requires ATP hydrolysis. Has a chymotrypsin-like activity. Plays a major role in the degradation of misfolded proteins. The protein is ATP-dependent Clp protease proteolytic subunit of Methylorubrum extorquens (strain CM4 / NCIMB 13688) (Methylobacterium extorquens).